Reading from the N-terminus, the 802-residue chain is Aldehyde dehydrogenase family 16 member A1 (802 aa).

It belongs to the aldehyde dehydrogenase family. As to quaternary structure, interacts with SPG21.

The protein is Aldehyde dehydrogenase family 16 member A1 (Aldh16a1) of Mus musculus (Mouse).